Consider the following 469-residue polypeptide: Tetratricopeptide repeat protein 38 (469 aa).

Ala-2 carries the post-translational modification N-acetylalanine. The residue at position 5 (Ser-5) is a Phosphoserine. TPR repeat units lie at residues 108–141 (REQLHVSAVETFAKGNFPKACELWEQILQDHPTD), 180–213 (SYVKGIYSFGLMETNFYDQAEKLAKEALSINPTD), and 252–285 (CHNYWHWALYLIEKGEYEAALTIYDTHILPSLQA).

Belongs to the TTC38 family.

This is Tetratricopeptide repeat protein 38 (TTC38) from Pongo abelii (Sumatran orangutan).